A 523-amino-acid polypeptide reads, in one-letter code: Siroheme synthase (523 aa).

Residues 1-203 (MNTFPLFFKL…GNENEAIAQL (203 aa)) are precorrin-2 dehydrogenase /sirohydrochlorin ferrochelatase. NAD(+)-binding positions include 22 to 23 (DV) and 43 to 44 (PS). Position 128 is a phosphoserine (S128). Residues 231–523 (GEVYIVGAGP…DGGLEQLVID (293 aa)) form a uroporphyrinogen-III C-methyltransferase region. P240 contacts S-adenosyl-L-methionine. D263 serves as the catalytic Proton acceptor. The Proton donor role is filled by K285. S-adenosyl-L-methionine is bound by residues 316-318 (GGD), I321, 346-347 (TA), M398, and A427.

This sequence in the N-terminal section; belongs to the precorrin-2 dehydrogenase / sirohydrochlorin ferrochelatase family. It in the C-terminal section; belongs to the precorrin methyltransferase family.

It catalyses the reaction uroporphyrinogen III + 2 S-adenosyl-L-methionine = precorrin-2 + 2 S-adenosyl-L-homocysteine + H(+). The catalysed reaction is precorrin-2 + NAD(+) = sirohydrochlorin + NADH + 2 H(+). It carries out the reaction siroheme + 2 H(+) = sirohydrochlorin + Fe(2+). It participates in cofactor biosynthesis; adenosylcobalamin biosynthesis; precorrin-2 from uroporphyrinogen III: step 1/1. It functions in the pathway cofactor biosynthesis; adenosylcobalamin biosynthesis; sirohydrochlorin from precorrin-2: step 1/1. The protein operates within porphyrin-containing compound metabolism; siroheme biosynthesis; precorrin-2 from uroporphyrinogen III: step 1/1. Its pathway is porphyrin-containing compound metabolism; siroheme biosynthesis; siroheme from sirohydrochlorin: step 1/1. It participates in porphyrin-containing compound metabolism; siroheme biosynthesis; sirohydrochlorin from precorrin-2: step 1/1. In terms of biological role, multifunctional enzyme that catalyzes the SAM-dependent methylations of uroporphyrinogen III at position C-2 and C-7 to form precorrin-2 via precorrin-1. Then it catalyzes the NAD-dependent ring dehydrogenation of precorrin-2 to yield sirohydrochlorin. Finally, it catalyzes the ferrochelation of sirohydrochlorin to yield siroheme. This Psychrobacter cryohalolentis (strain ATCC BAA-1226 / DSM 17306 / VKM B-2378 / K5) protein is Siroheme synthase.